A 45-amino-acid polypeptide reads, in one-letter code: Small polypeptide DEVIL 23 (45 aa).

Residues K13–D44 are required for DVL/RTFL small polypeptide activity. The chain crosses the membrane as a helical span at residues C22–L39.

Belongs to the DVL/RTFL small polypeptides family.

The protein localises to the cell membrane. Its function is as follows. Small polypeptide acting as a regulatory molecule which coordinates cellular responses required for differentiation, growth and development, probably by restricting polar cell proliferation in lateral organs and coordinating socket cell recruitment and differentiation at trichome sites. This is Small polypeptide DEVIL 23 from Arabidopsis thaliana (Mouse-ear cress).